Consider the following 92-residue polypeptide: Large ribosomal subunit protein eL43 (92 aa).

Zn(2+) is bound by residues Cys39, Cys42, Cys57, and Cys60. The segment at 39–60 (CSFCGKTKMKRRAVGIWHCGSC) adopts a C4-type zinc-finger fold.

The protein belongs to the eukaryotic ribosomal protein eL43 family. As to quaternary structure, component of the large ribosomal subunit.

It is found in the cytoplasm. In terms of biological role, component of the large ribosomal subunit. The ribosome is a large ribonucleoprotein complex responsible for the synthesis of proteins in the cell. The polypeptide is Large ribosomal subunit protein eL43 (rpl37a) (Ictalurus punctatus (Channel catfish)).